The chain runs to 904 residues: NADH-quinone oxidoreductase subunit G (904 aa).

The 2Fe-2S ferredoxin-type domain occupies 1–83 (MATIHVDGKA…GTWISIDDEE (83 aa)). [2Fe-2S] cluster-binding residues include Cys34, Cys45, Cys48, and Cys67. Residues 83–122 (ESKAFRASVVEWLMTNHPHDCPVCEEGGHCHLQDMTVMTG) form the 4Fe-4S His(Cys)3-ligated-type domain. Positions 99, 103, 106, 112, 151, 154, 157, 201, 228, 231, 235, and 263 each coordinate [4Fe-4S] cluster. The 4Fe-4S Mo/W bis-MGD-type domain maps to 221 to 277 (MQFAPSICHGCSSGCNISPGERYGELRRIENRFNGSVNQYFLCDRGRFGYGYVNRKD).

This sequence belongs to the complex I 75 kDa subunit family. As to quaternary structure, composed of 13 different subunits. Subunits NuoCD, E, F, and G constitute the peripheral sector of the complex. The cofactor is [2Fe-2S] cluster. [4Fe-4S] cluster is required as a cofactor.

It catalyses the reaction a quinone + NADH + 5 H(+)(in) = a quinol + NAD(+) + 4 H(+)(out). In terms of biological role, NDH-1 shuttles electrons from NADH, via FMN and iron-sulfur (Fe-S) centers, to quinones in the respiratory chain. The immediate electron acceptor for the enzyme in this species is believed to be ubiquinone. Couples the redox reaction to proton translocation (for every two electrons transferred, four hydrogen ions are translocated across the cytoplasmic membrane), and thus conserves the redox energy in a proton gradient. This chain is NADH-quinone oxidoreductase subunit G (nuoG), found in Pseudomonas putida (strain ATCC 47054 / DSM 6125 / CFBP 8728 / NCIMB 11950 / KT2440).